The primary structure comprises 320 residues: Malate dehydrogenase (320 aa).

Residues 10-15 (GAGQIG) and D34 contribute to the NAD(+) site. Substrate-binding residues include R83 and R89. Residues N96 and 119-121 (ITN) each bind NAD(+). The substrate site is built by N121 and R152. H176 (proton acceptor) is an active-site residue.

Belongs to the LDH/MDH superfamily. MDH type 3 family.

The enzyme catalyses (S)-malate + NAD(+) = oxaloacetate + NADH + H(+). Catalyzes the reversible oxidation of malate to oxaloacetate. The sequence is that of Malate dehydrogenase from Methylobacterium sp. (strain 4-46).